Reading from the N-terminus, the 65-residue chain is MSTCGNCDCVDKSQCVKKGNSYGIDIVETEKSYVDEVIVAAEAAEHDGKCKCGAACACTDCKCGN.

This sequence belongs to the metallothionein superfamily. Type 15 family.

Functionally, metallothioneins have a high content of cysteine residues that bind various heavy metals. The protein is Metallothionein-like protein type 3 of Musa acuminata (Banana).